The primary structure comprises 578 residues: Telomere repeat-binding protein 1 (578 aa).

The 80-residue stretch at 293-372 folds into the Ubiquitin-like domain; it reads VKLRIKSFRV…HLDSLDFSLE (80 aa). The interval 440–467 is disordered; that stretch reads ELSSQSQPPSRKSRRSEQQQQQAAQRRI. Residues 463-522 form the HTH myb-type domain; that stretch reads AQRRIRRPFSVAEVEALVQAVEKLGTGRWRDVKLCAFEDADHRTYVDLKDKWKTLVHTAK. Interaction with DNA regions lie at residues 465-469, 511-515, and 522-529; these read RRIRR, KDKWK, and KISPQQRR. The segment at residues 491-518 is a DNA-binding region (H-T-H motif); the sequence is WRDVKLCAFEDADHRTYVDLKDKWKTLV.

As to quaternary structure, homodimer and heterodimer with TRP2 and TRP3. Interacts with KU70. In terms of tissue distribution, expressed ubiquitously. Highest expression in flowers and leaves.

It localises to the nucleus. Its function is as follows. Binds specifically to the plant telomeric double-stranded DNA sequences 5'-GGTTTAG-3'. At least 4 repeats of telomeric sequences are required for binding. Induces DNA bending. This Arabidopsis thaliana (Mouse-ear cress) protein is Telomere repeat-binding protein 1 (TRP1).